The following is a 291-amino-acid chain: Transcription antitermination protein NusB (291 aa).

The protein belongs to the NusB family.

Its function is as follows. Involved in transcription antitermination. Required for transcription of ribosomal RNA (rRNA) genes. Binds specifically to the boxA antiterminator sequence of the ribosomal RNA (rrn) operons. The sequence is that of Transcription antitermination protein NusB from Synechococcus sp. (strain JA-2-3B'a(2-13)) (Cyanobacteria bacterium Yellowstone B-Prime).